The following is a 356-amino-acid chain: Phospho-N-acetylmuramoyl-pentapeptide-transferase (356 aa).

Transmembrane regions (helical) follow at residues 27-47, 74-94, 97-117, 128-148, 164-184, 201-221, 241-261, 284-304, and 333-353; these read AAAITALLIGLIFGPRFIGWM, MGGLMILIAVSISLFLWMDFA, YVWACIAVMLGFGVIGFIDDY, VSGKVRLLWEFGIAFFACYLI, PVIDLGWFYYPFAAFVIVGTA, VIIASLAFFVISYVVGNAVFA, AIIGAGFAFLWFNAPPAAIFM, IVLGIVGGLFVAEALSVIIQV, and TVVIRFWIISFALALLGLATL.

This sequence belongs to the glycosyltransferase 4 family. MraY subfamily. Requires Mg(2+) as cofactor.

The protein resides in the cell inner membrane. The catalysed reaction is UDP-N-acetyl-alpha-D-muramoyl-L-alanyl-gamma-D-glutamyl-meso-2,6-diaminopimeloyl-D-alanyl-D-alanine + di-trans,octa-cis-undecaprenyl phosphate = di-trans,octa-cis-undecaprenyl diphospho-N-acetyl-alpha-D-muramoyl-L-alanyl-D-glutamyl-meso-2,6-diaminopimeloyl-D-alanyl-D-alanine + UMP. It functions in the pathway cell wall biogenesis; peptidoglycan biosynthesis. Functionally, catalyzes the initial step of the lipid cycle reactions in the biosynthesis of the cell wall peptidoglycan: transfers peptidoglycan precursor phospho-MurNAc-pentapeptide from UDP-MurNAc-pentapeptide onto the lipid carrier undecaprenyl phosphate, yielding undecaprenyl-pyrophosphoryl-MurNAc-pentapeptide, known as lipid I. In Zymomonas mobilis subsp. mobilis (strain ATCC 31821 / ZM4 / CP4), this protein is Phospho-N-acetylmuramoyl-pentapeptide-transferase.